The following is a 20-amino-acid chain: Truncated non-structural protein of 4.9 kDa (20 aa).

The protein belongs to the coronaviruses ns4.9 protein family.

The chain is Truncated non-structural protein of 4.9 kDa from Sus scrofa (Pig).